Reading from the N-terminus, the 937-residue chain is Isoleucine--tRNA ligase (937 aa).

The 'HIGH' region signature appears at 58–68 (PYANGSIHIGH). Position 561 (Glu-561) interacts with L-isoleucyl-5'-AMP. The short motif at 602–606 (KMSKS) is the 'KMSKS' region element. Lys-605 provides a ligand contact to ATP. Residues Cys-900, Cys-903, Cys-920, and Cys-923 each contribute to the Zn(2+) site.

It belongs to the class-I aminoacyl-tRNA synthetase family. IleS type 1 subfamily. In terms of assembly, monomer. It depends on Zn(2+) as a cofactor.

Its subcellular location is the cytoplasm. It catalyses the reaction tRNA(Ile) + L-isoleucine + ATP = L-isoleucyl-tRNA(Ile) + AMP + diphosphate. In terms of biological role, catalyzes the attachment of isoleucine to tRNA(Ile). As IleRS can inadvertently accommodate and process structurally similar amino acids such as valine, to avoid such errors it has two additional distinct tRNA(Ile)-dependent editing activities. One activity is designated as 'pretransfer' editing and involves the hydrolysis of activated Val-AMP. The other activity is designated 'posttransfer' editing and involves deacylation of mischarged Val-tRNA(Ile). This chain is Isoleucine--tRNA ligase, found in Photorhabdus laumondii subsp. laumondii (strain DSM 15139 / CIP 105565 / TT01) (Photorhabdus luminescens subsp. laumondii).